The sequence spans 400 residues: Exodeoxyribonuclease 7 large subunit (400 aa).

It belongs to the XseA family. As to quaternary structure, heterooligomer composed of large and small subunits.

The protein localises to the cytoplasm. The catalysed reaction is Exonucleolytic cleavage in either 5'- to 3'- or 3'- to 5'-direction to yield nucleoside 5'-phosphates.. Its function is as follows. Bidirectionally degrades single-stranded DNA into large acid-insoluble oligonucleotides, which are then degraded further into small acid-soluble oligonucleotides. The protein is Exodeoxyribonuclease 7 large subunit of Clostridium novyi (strain NT).